We begin with the raw amino-acid sequence, 194 residues long: ATP-dependent Clp protease proteolytic subunit (194 aa).

Serine 98 functions as the Nucleophile in the catalytic mechanism. Histidine 123 is a catalytic residue.

This sequence belongs to the peptidase S14 family. Fourteen ClpP subunits assemble into 2 heptameric rings which stack back to back to give a disk-like structure with a central cavity, resembling the structure of eukaryotic proteasomes.

It is found in the cytoplasm. It carries out the reaction Hydrolysis of proteins to small peptides in the presence of ATP and magnesium. alpha-casein is the usual test substrate. In the absence of ATP, only oligopeptides shorter than five residues are hydrolyzed (such as succinyl-Leu-Tyr-|-NHMec, and Leu-Tyr-Leu-|-Tyr-Trp, in which cleavage of the -Tyr-|-Leu- and -Tyr-|-Trp bonds also occurs).. Functionally, cleaves peptides in various proteins in a process that requires ATP hydrolysis. Has a chymotrypsin-like activity. Plays a major role in the degradation of misfolded proteins. This chain is ATP-dependent Clp protease proteolytic subunit, found in Aliarcobacter butzleri (strain RM4018) (Arcobacter butzleri).